A 348-amino-acid chain; its full sequence is Dihydroorotase (348 aa).

Zn(2+) is bound by residues His-17 and His-19. Substrate contacts are provided by residues 19–21 (HLR) and Asn-45. Residues Lys-103, His-140, and His-178 each coordinate Zn(2+). The residue at position 103 (Lys-103) is an N6-carboxylysine. His-140 contributes to the substrate binding site. Leu-223 is a binding site for substrate. Asp-251 lines the Zn(2+) pocket. The active site involves Asp-251. Substrate contacts are provided by His-255 and Ala-267.

The protein belongs to the metallo-dependent hydrolases superfamily. DHOase family. Class II DHOase subfamily. As to quaternary structure, homodimer. The cofactor is Zn(2+).

It carries out the reaction (S)-dihydroorotate + H2O = N-carbamoyl-L-aspartate + H(+). It participates in pyrimidine metabolism; UMP biosynthesis via de novo pathway; (S)-dihydroorotate from bicarbonate: step 3/3. In terms of biological role, catalyzes the reversible cyclization of carbamoyl aspartate to dihydroorotate. The protein is Dihydroorotase of Salmonella agona (strain SL483).